The chain runs to 281 residues: Very long chain fatty acid elongase 7 (281 aa).

Ala2 carries the post-translational modification N-acetylalanine. At 2–27 (AFSDLTSRTVRLYDNWIKDADPRVED) the chain is on the lumenal side. A helical membrane pass occupies residues 28-48 (WLLMSSPLPQTIILGFYVYFV). Over 49–66 (TSLGPKLMENRKPFELKK) the chain is Cytoplasmic. Residues 67–87 (VMITYNFSIVLFSVYMFYEFI) form a helical membrane-spanning segment. Topologically, residues 88–115 (MSGWGTGYSFRCDIVDYSQSPTALRMVR) are lumenal. Cysteines 99 and 231 form a disulfide. The helical transmembrane segment at 116 to 136 (TCWLYYFSKFIELLDTIFFIL) threads the bilayer. Residues Lys124, Arg137, Lys139, Gln142, and His147 each contribute to the 3-oxoeicosanoyl-CoA site. Residues 137 to 142 (RKKNSQ) lie on the Cytoplasmic side of the membrane. Residues 143–162 (VTFLHVFHHTIMPWTWWFGV) traverse the membrane as a helical segment. The short motif at 147 to 151 (HVFHH) is the HxxHH motif element. Residue His150 is the Nucleophile of the active site. Over 163–171 (KFAAGGLGT) the chain is Lumenal. The chain crosses the membrane as a helical span at residues 172-194 (FHAFLNTAVHVVMYSYYGLCALG). 3-oxoeicosanoyl-CoA contacts are provided by Tyr187, Lys204, Thr208, and Gln211. At 195 to 206 (PDYQKYLWWKKY) the chain is on the cytoplasmic side. Residues 207–227 (LTSLQLIQFVLITIHISQFFF) form a helical membrane-spanning segment. Topologically, residues 228-236 (MEDCKYQFP) are lumenal. The chain crosses the membrane as a helical span at residues 237 to 257 (VFQYIIMSYGCIFLLLFLHFW). At 258–281 (YRAYTKGQRLPKTVKHGICKNKDH) the chain is on the cytoplasmic side. Residue Arg266 participates in 3-oxoeicosanoyl-CoA binding. Residues 277 to 281 (KNKDH) carry the Di-lysine motif motif.

This sequence belongs to the ELO family. ELOVL7 subfamily. Homodimer. Interacts with TECR.

The protein resides in the endoplasmic reticulum membrane. The enzyme catalyses a very-long-chain acyl-CoA + malonyl-CoA + H(+) = a very-long-chain 3-oxoacyl-CoA + CO2 + CoA. It catalyses the reaction eicosanoyl-CoA + malonyl-CoA + H(+) = 3-oxodocosanoyl-CoA + CO2 + CoA. The catalysed reaction is (5Z,8Z,11Z,14Z)-eicosatetraenoyl-CoA + malonyl-CoA + H(+) = (7Z,10Z,13Z,16Z)-3-oxodocosatetraenoyl-CoA + CO2 + CoA. It carries out the reaction (6Z,9Z,12Z)-octadecatrienoyl-CoA + malonyl-CoA + H(+) = (8Z,11Z,14Z)-3-oxoeicosatrienoyl-CoA + CO2 + CoA. The enzyme catalyses (9Z,12Z)-octadecadienoyl-CoA + malonyl-CoA + H(+) = (11Z,14Z)-3-oxoicosa-11,14-dienoyl-CoA + CO2 + CoA. It catalyses the reaction (9Z)-octadecenoyl-CoA + malonyl-CoA + H(+) = 3-oxo-(11Z)-eicosenoyl-CoA + CO2 + CoA. The catalysed reaction is octadecanoyl-CoA + malonyl-CoA + H(+) = 3-oxoeicosanoyl-CoA + CO2 + CoA. It carries out the reaction hexadecanoyl-CoA + malonyl-CoA + H(+) = 3-oxooctadecanoyl-CoA + CO2 + CoA. The enzyme catalyses (9Z,12Z,15Z)-octadecatrienoyl-CoA + malonyl-CoA + H(+) = (11Z,14Z,17Z)-3-oxoeicosatrienoyl-CoA + CO2 + CoA. Its pathway is lipid metabolism; fatty acid biosynthesis. Its function is as follows. Catalyzes the first and rate-limiting reaction of the four reactions that constitute the long-chain fatty acids elongation cycle. This endoplasmic reticulum-bound enzymatic process allows the addition of 2 carbons to the chain of long- and very long-chain fatty acids (VLCFAs) per cycle. Condensing enzyme with higher activity toward C18 acyl-CoAs, especially C18:3(n-3) acyl-CoAs and C18:3(n-6)-CoAs. Also active toward C20:4-, C18:0-, C18:1-, C18:2- and C16:0-CoAs, and weakly toward C20:0-CoA. Little or no activity toward C22:0-, C24:0-, or C26:0-CoAs. May participate in the production of saturated and polyunsaturated VLCFAs of different chain lengths that are involved in multiple biological processes as precursors of membrane lipids and lipid mediators. This is Very long chain fatty acid elongase 7 from Bos taurus (Bovine).